A 479-amino-acid chain; its full sequence is GTPase Der (479 aa).

EngA-type G domains lie at 3-167 (FTLA…EAAA) and 191-366 (LQIA…ATWN). Residues 9–16 (GRPNVGKS), 56–60 (DTAGL), 119–122 (NKAE), 197–204 (GRPNAGKS), 244–248 (DTAGM), and 309–312 (NKWD) each bind GTP. Residues 367–453 (TRISTARLNQ…RLWMRSQADD (87 aa)) form the KH-like domain. Positions 449–479 (SQADDNPYKNRKKSTPSRLNKHVRKGETKKG) are disordered. Residues 457-472 (KNRKKSTPSRLNKHVR) are compositionally biased toward basic residues.

This sequence belongs to the TRAFAC class TrmE-Era-EngA-EngB-Septin-like GTPase superfamily. EngA (Der) GTPase family. As to quaternary structure, associates with the 50S ribosomal subunit.

GTPase that plays an essential role in the late steps of ribosome biogenesis. The chain is GTPase Der from Jannaschia sp. (strain CCS1).